A 102-amino-acid chain; its full sequence is Small ribosomal subunit protein uS10 (102 aa).

This sequence belongs to the universal ribosomal protein uS10 family. In terms of assembly, part of the 30S ribosomal subunit.

In terms of biological role, involved in the binding of tRNA to the ribosomes. This is Small ribosomal subunit protein uS10 from Bifidobacterium animalis subsp. lactis (strain AD011).